Here is a 384-residue protein sequence, read N- to C-terminus: Carbamoyl phosphate synthase small chain (384 aa).

The segment at 1–193 (MTKPATTPAI…DSHPEIPASE (193 aa)) is CPSase. 3 residues coordinate L-glutamine: Ser-51, Gly-245, and Gly-247. Residues 197-384 (HVVAYDYGVK…ISAMAPVVDR (188 aa)) form the Glutamine amidotransferase type-1 domain. The active-site Nucleophile is the Cys-273. L-glutamine-binding residues include Leu-274, Gln-277, Asn-315, Gly-317, and Phe-318. Catalysis depends on residues His-357 and Glu-359.

It belongs to the CarA family. Composed of two chains; the small (or glutamine) chain promotes the hydrolysis of glutamine to ammonia, which is used by the large (or ammonia) chain to synthesize carbamoyl phosphate. Tetramer of heterodimers (alpha,beta)4.

The enzyme catalyses hydrogencarbonate + L-glutamine + 2 ATP + H2O = carbamoyl phosphate + L-glutamate + 2 ADP + phosphate + 2 H(+). The catalysed reaction is L-glutamine + H2O = L-glutamate + NH4(+). It participates in amino-acid biosynthesis; L-arginine biosynthesis; carbamoyl phosphate from bicarbonate: step 1/1. It functions in the pathway pyrimidine metabolism; UMP biosynthesis via de novo pathway; (S)-dihydroorotate from bicarbonate: step 1/3. Its function is as follows. Small subunit of the glutamine-dependent carbamoyl phosphate synthetase (CPSase). CPSase catalyzes the formation of carbamoyl phosphate from the ammonia moiety of glutamine, carbonate, and phosphate donated by ATP, constituting the first step of 2 biosynthetic pathways, one leading to arginine and/or urea and the other to pyrimidine nucleotides. The small subunit (glutamine amidotransferase) binds and cleaves glutamine to supply the large subunit with the substrate ammonia. In Stutzerimonas stutzeri (Pseudomonas stutzeri), this protein is Carbamoyl phosphate synthase small chain.